A 323-amino-acid chain; its full sequence is ATP synthase gamma chain (323 aa).

Belongs to the ATPase gamma chain family. F-type ATPases have 2 components, CF(1) - the catalytic core - and CF(0) - the membrane proton channel. CF(1) has five subunits: alpha(3), beta(3), gamma(1), delta(1), epsilon(1). CF(0) has three main subunits: a, b and c.

It localises to the cell inner membrane. In terms of biological role, produces ATP from ADP in the presence of a proton gradient across the membrane. The gamma chain is believed to be important in regulating ATPase activity and the flow of protons through the CF(0) complex. This chain is ATP synthase gamma chain, found in Rickettsia africae (strain ESF-5).